The chain runs to 308 residues: Glycine--tRNA ligase alpha subunit (308 aa).

The protein belongs to the class-II aminoacyl-tRNA synthetase family. Tetramer of two alpha and two beta subunits.

Its subcellular location is the cytoplasm. It carries out the reaction tRNA(Gly) + glycine + ATP = glycyl-tRNA(Gly) + AMP + diphosphate. The chain is Glycine--tRNA ligase alpha subunit from Brucella abortus (strain 2308).